The sequence spans 436 residues: UPF0597 protein YhaM (436 aa).

The protein belongs to the UPF0597 family.

The sequence is that of UPF0597 protein YhaM from Salmonella gallinarum (strain 287/91 / NCTC 13346).